A 192-amino-acid chain; its full sequence is GTP-dependent dephospho-CoA kinase (192 aa).

Residues D49, V50, V51, D68, K70, and E127 each contribute to the GTP site.

Belongs to the GTP-dependent DPCK family.

The enzyme catalyses 3'-dephospho-CoA + GTP = GDP + CoA + H(+). Its pathway is cofactor biosynthesis; coenzyme A biosynthesis. Functionally, catalyzes the GTP-dependent phosphorylation of the 3'-hydroxyl group of dephosphocoenzyme A to form coenzyme A (CoA). This chain is GTP-dependent dephospho-CoA kinase, found in Halorubrum lacusprofundi (strain ATCC 49239 / DSM 5036 / JCM 8891 / ACAM 34).